The sequence spans 302 residues: MTKDVLATFPAIEIKKNESLSHYTNTKTGGPADYVAFPKSISETKALITFANEQNLPLTVIGNASNLIVKDGGIRGLTIILTRMKQIHASGTKVVAEAGAAIIATTKVACGASLTGLEFAAGIPGSVGGAIFMNAGAYGGEMSEVVETVTVLTPAGQLKTLDHDELDFGYRHSTIQDYDDIVVSVTFGLKPGNQTKIQARMDELNTLRAAKQPLEWPSCGSVFKRPTGYFTGKLIHDAGLQGHRIGGAEVSKKHAGFIINVDHATATDYMDMIHYVQKVVFERFGVHLQTEVRIIGEDVVQG.

An FAD-binding PCMH-type domain is found at Lys27 to Gly192. Residue Arg171 is part of the active site. Ser221 acts as the Proton donor in catalysis. Glu291 is an active-site residue.

This sequence belongs to the MurB family. The cofactor is FAD.

The protein resides in the cytoplasm. It carries out the reaction UDP-N-acetyl-alpha-D-muramate + NADP(+) = UDP-N-acetyl-3-O-(1-carboxyvinyl)-alpha-D-glucosamine + NADPH + H(+). It participates in cell wall biogenesis; peptidoglycan biosynthesis. Its function is as follows. Cell wall formation. The protein is UDP-N-acetylenolpyruvoylglucosamine reductase of Lactiplantibacillus plantarum (strain ATCC BAA-793 / NCIMB 8826 / WCFS1) (Lactobacillus plantarum).